Here is a 359-residue protein sequence, read N- to C-terminus: Fructose-bisphosphate aldolase 1 (359 aa).

S50 provides a ligand contact to D-glyceraldehyde 3-phosphate. D83 serves as the catalytic Proton donor. Zn(2+) contacts are provided by H84, D105, E142, and H198. Residue G199 coordinates dihydroxyacetone phosphate. Zn(2+) is bound at residue H232. Dihydroxyacetone phosphate contacts are provided by residues 233–235 (GSS) and 275–278 (NIDT).

This sequence belongs to the class II fructose-bisphosphate aldolase family. Homodimer. The cofactor is Zn(2+).

The enzyme catalyses beta-D-fructose 1,6-bisphosphate = D-glyceraldehyde 3-phosphate + dihydroxyacetone phosphate. It functions in the pathway carbohydrate biosynthesis; Calvin cycle. The protein operates within carbohydrate degradation; glycolysis; D-glyceraldehyde 3-phosphate and glycerone phosphate from D-glucose: step 4/4. Catalyzes the aldol condensation of dihydroxyacetone phosphate (DHAP or glycerone-phosphate) with glyceraldehyde 3-phosphate (G3P) to form fructose 1,6-bisphosphate (FBP) in gluconeogenesis and the reverse reaction in glycolysis. This chain is Fructose-bisphosphate aldolase 1 (cfxA), found in Cereibacter sphaeroides (Rhodobacter sphaeroides).